Consider the following 635-residue polypeptide: Biosynthetic arginine decarboxylase (635 aa).

N6-(pyridoxal phosphate)lysine is present on Lys-100. 282-292 (IDIGGGLGVDY) provides a ligand contact to substrate.

Belongs to the Orn/Lys/Arg decarboxylase class-II family. SpeA subfamily. Mg(2+) serves as cofactor. Requires pyridoxal 5'-phosphate as cofactor.

The catalysed reaction is L-arginine + H(+) = agmatine + CO2. Its pathway is amine and polyamine biosynthesis; agmatine biosynthesis; agmatine from L-arginine: step 1/1. In terms of biological role, catalyzes the biosynthesis of agmatine from arginine. The chain is Biosynthetic arginine decarboxylase from Pelobacter propionicus (strain DSM 2379 / NBRC 103807 / OttBd1).